Reading from the N-terminus, the 682-residue chain is Potassium-transporting ATPase ATP-binding subunit (682 aa).

Transmembrane regions (helical) follow at residues 34-54, 62-82, 219-239, and 254-274; these read PVMFIVWIGSLLTTCISIAMA, ALFSAAISGWLWVTVLFANFA, IALTILLIALTIVFLLATATL, and VLVALLVCLIPTTIGGLLSAI. D307 functions as the 4-aspartylphosphate intermediate in the catalytic mechanism. Residues D344, E348, 377-384, and K395 each bind ATP; that span reads FTAQSRMS. 2 residues coordinate Mg(2+): D518 and D522. 3 helical membrane-spanning segments follow: residues 588-608, 616-636, and 656-676; these read FAIIPAAFAATYPQLNALNIM, AILSAVIFNALIIVFLIPLAL, and IYGLGGLLVPFIGIKVIDLLL.

The protein belongs to the cation transport ATPase (P-type) (TC 3.A.3) family. Type IA subfamily. In terms of assembly, the system is composed of three essential subunits: KdpA, KdpB and KdpC.

The protein localises to the cell inner membrane. It catalyses the reaction K(+)(out) + ATP + H2O = K(+)(in) + ADP + phosphate + H(+). Part of the high-affinity ATP-driven potassium transport (or Kdp) system, which catalyzes the hydrolysis of ATP coupled with the electrogenic transport of potassium into the cytoplasm. This subunit is responsible for energy coupling to the transport system and for the release of the potassium ions to the cytoplasm. The polypeptide is Potassium-transporting ATPase ATP-binding subunit (Shigella boydii serotype 18 (strain CDC 3083-94 / BS512)).